Reading from the N-terminus, the 75-residue chain is DNA-directed RNA polymerase subunit omega (75 aa).

The protein belongs to the RNA polymerase subunit omega family. In terms of assembly, in cyanobacteria the RNAP catalytic core is composed of 2 alpha, 1 beta, 1 beta', 1 gamma and 1 omega subunit. When a sigma factor is associated with the core the holoenzyme is formed, which can initiate transcription.

The enzyme catalyses RNA(n) + a ribonucleoside 5'-triphosphate = RNA(n+1) + diphosphate. In terms of biological role, promotes RNA polymerase assembly. Latches the N- and C-terminal regions of the beta' subunit thereby facilitating its interaction with the beta and alpha subunits. The protein is DNA-directed RNA polymerase subunit omega of Parasynechococcus marenigrum (strain WH8102).